The primary structure comprises 108 residues: Protein FATTY ACID EXPORT 7 (108 aa).

Transmembrane regions (helical) follow at residues 32-52, 55-75, and 85-105; these read ISLV…TELP, PVLA…MMGS, and PAGL…HGLI.

It belongs to the TMEM14 family.

It localises to the membrane. In terms of biological role, may be involved in free fatty acids export. The sequence is that of Protein FATTY ACID EXPORT 7 from Arabidopsis thaliana (Mouse-ear cress).